Reading from the N-terminus, the 1015-residue chain is Protein HIRA (1015 aa).

2 WD repeats span residues 11-53 and 68-107; these read HNGK…QEDD and NHLACVNCVRWSNSGMYLASGGDDKLIMVWKRATYIGPST. Phosphoserine is present on S111. WD repeat units follow at residues 129–168, 172–211, 220–263, 266–322, and 326–367; these read SHSGDVMDVAWSPHDAWLASCSVDNTVVIWNAVKFPEILA, GHSGLVKGLTWDPVGKYIASQADDRSLKVWRTLDWQLETS, GGTT…TNMD, GHRK…PLVV, and LFDK…DPLS. Residues 408 to 431 are disordered; sequence QQQQQLDQKNATTRETSSASSVTG. Positions 413–431 are enriched in polar residues; the sequence is LDQKNATTRETSSASSVTG. The interaction with ASF1A stretch occupies residues 421–479; sequence RETSSASSVTGVVNGESLEDIRKNLLKKQVETRTADGRRRITPLCIAQLDTGDFSTAFF. The interval 421–727 is interaction with CCNA1; it reads RETSSASSVT…RLKCNREGKE (307 aa). The interval 439–475 is required for repression of histone gene transcription; it reads EDIRKNLLKKQVETRTADGRRRITPLCIAQLDTGDFS. Low complexity-rich tracts occupy residues 494 to 507 and 540 to 556; these read SSPSGQQLLPLDSS and ATSTPAASSPSVLTTPS. A disordered region spans residues 494–558; that stretch reads SSPSGQQLLP…PSVLTTPSKI (65 aa). S548 carries the post-translational modification Phosphoserine. T554 is subject to Phosphothreonine. Residue S556 is modified to Phosphoserine. T575 bears the Phosphothreonine mark. 7 positions are modified to phosphoserine: S583, S608, S609, S610, S612, S659, and S673. 2 interaction with PAX3 regions span residues 593-737 and 738-826; these read KEQN…SRVL and TAAG…SQIL. The interval 594 to 824 is interaction with histone H2B; sequence EQNLVKELRS…LSGSDMTVSQ (231 aa). Over residues 603-617 the composition is skewed to basic and acidic residues; sequence SRELESSSDSDEKVH. Residues 603–623 are disordered; sequence SRELESSSDSDEKVHLAKPSS. The segment at 736 to 1015 is interaction with histone H4; that stretch reads VLTAAGSCDV…QEQLDILRDK (280 aa).

It belongs to the WD repeat HIR1 family. As to quaternary structure, interacts with CCNA1, HIRIP3 and NFU1/HIRIP5. Part of a complex which includes ASF1A, CABIN1, histone H3.3, histone H4 and UBN1. Interacts with histone H2B, histone H3-3B, PAX3 and PAX7. Sumoylated. Post-translationally, phosphorylated by CDK2/CCNA1 and CDK2/CCNE1 on Thr-554 in vitro. Also phosphorylated on Thr-554 in vivo. As to expression, expressed in cerebrum, cerebellum, heart, kidney, liver, lung and spleen.

It is found in the nucleus. The protein localises to the PML body. Functionally, required for the periodic repression of histone gene transcription during the cell cycle. Cooperates with ASF1A to promote replication-independent chromatin assembly. Required for the formation of senescence-associated heterochromatin foci (SAHF) and efficient senescence-associated cell cycle exit. The polypeptide is Protein HIRA (Hira) (Mus musculus (Mouse)).